Reading from the N-terminus, the 528-residue chain is Na(+)/H(+) antiporter NhaB (528 aa).

The next 10 helical transmembrane spans lie at 11–31 (VNFLGNSPKWYKLAILSFLVI), 67–87 (PGGLLAIQAVAIGMTSPSQVL), 98–118 (LLLIFMVAGIYFMKQLLLFVF), 140–160 (AFLSAFLDALTVIAVIIAVGI), 240–260 (FFIRMSPVTIPVLLSGLLTCV), 311–331 (LVAGLALHLASVGLIGLSVII), 350–370 (EEALPFTALLAVFFAIVGVII), 391–411 (LVVFFIANGVLSMVSDNVFVG), 449–469 (ATPNGQAAFLFLLTSALAPLI), and 476–496 (MVIMALPYTLVLSIVGIVTIE).

This sequence belongs to the NhaB Na(+)/H(+) (TC 2.A.34) antiporter family.

Its subcellular location is the cell inner membrane. It catalyses the reaction 2 Na(+)(in) + 3 H(+)(out) = 2 Na(+)(out) + 3 H(+)(in). Na(+)/H(+) antiporter that extrudes sodium in exchange for external protons. In Shewanella denitrificans (strain OS217 / ATCC BAA-1090 / DSM 15013), this protein is Na(+)/H(+) antiporter NhaB.